The chain runs to 376 residues: Probable deoxyhypusine synthase (376 aa).

NAD(+) contacts are provided by residues 105-109, 131-133, Glu-137, and Asp-238; these read SNLVS and TAG. 136 to 137 lines the spermidine pocket; the sequence is EE. Asp-243 lines the spermidine pocket. Gly-283 serves as a coordination point for NAD(+). His-288 is a binding site for spermidine. 308-309 contacts NAD(+); that stretch reads TG. Spermidine contacts are provided by residues 314-316 and 323-329; these read GSD and EAVSWGK. Lys-329 serves as the catalytic Nucleophile. 342 to 343 is an NAD(+) binding site; sequence EA.

Belongs to the deoxyhypusine synthase family. NAD(+) is required as a cofactor.

It catalyses the reaction [eIF5A protein]-L-lysine + spermidine = [eIF5A protein]-deoxyhypusine + propane-1,3-diamine. Its pathway is protein modification; eIF5A hypusination. Catalyzes the NAD-dependent oxidative cleavage of spermidine and the subsequent transfer of the butylamine moiety of spermidine to the epsilon-amino group of a critical lysine residue of the eIF-5A precursor protein to form the intermediate deoxyhypusine residue. This is the first step of the post-translational modification of that lysine into an unusual amino acid residue named hypusine. Hypusination is unique to mature eIF-5A factor and is essential for its function. The chain is Probable deoxyhypusine synthase (dhps) from Dictyostelium discoideum (Social amoeba).